The chain runs to 60 residues: UPF0291 protein Nther_1806 (60 aa).

This sequence belongs to the UPF0291 family.

It is found in the cytoplasm. In Natranaerobius thermophilus (strain ATCC BAA-1301 / DSM 18059 / JW/NM-WN-LF), this protein is UPF0291 protein Nther_1806.